The primary structure comprises 612 residues: Protein NorD (612 aa).

The disordered stretch occupies residues 220–246 (EGEGDLETPPSGQSRQRNGARRVDDSS). In terms of domain architecture, VWFA spans 420-609 (DLACLLLADL…FPPAAAVQAT (190 aa)).

Its function is as follows. Component of the anaerobic respiratory chain that transforms nitrate to dinitrogen (denitrification). The polypeptide is Protein NorD (norD) (Stutzerimonas stutzeri (Pseudomonas stutzeri)).